Consider the following 402-residue polypeptide: Multidrug resistance protein MdtH (402 aa).

Residues 1 to 12 (MSRVSQARNLGK) are Cytoplasmic-facing. Residues 13–33 (YFLLIDNMLVVLGFFVVFPLI) traverse the membrane as a helical segment. The Periplasmic segment spans residues 34-98 (SIRFVDQMGW…GFATMGIAHE (65 aa)). Residues 99–116 (PWLLWFSCLLSGLGGTLF) traverse the membrane as a helical segment. Topologically, residues 117–138 (DPPRSALVVKLIRPQQRGRFFS) are cytoplasmic. Residues 139–159 (LLMMQDSAGAVIGALLGSWLL) traverse the membrane as a helical segment. Over 160–164 (QYDFR) the chain is Periplasmic. Residues 165 to 185 (LVCATGAVLFVLCAAFNAWLL) form a helical membrane-spanning segment. Residues 186–213 (PAWKLSTVRTPVREGMTRVMRDKRFVTY) are Cytoplasmic-facing. Residues 214-234 (VLTLAGYYMLAVQVMLMLPIM) traverse the membrane as a helical segment. The Periplasmic segment spans residues 235–243 (VNDVAGAPS). Residues 244–264 (AVKWMYAIEACLSLTLLYPIA) form a helical membrane-spanning segment. The Cytoplasmic segment spans residues 265–276 (RWSEKHFRLEHR). The chain crosses the membrane as a helical span at residues 277 to 297 (LMAGLLIMSLSMMPVGMVSGL). Residues 298-299 (QQ) are Periplasmic-facing. Residues 300–320 (LFTLICLFYIGSIIAEPARET) traverse the membrane as a helical segment. Over 321 to 339 (LSASLADARARGSYMGFSR) the chain is Cytoplasmic. Residues 340–360 (LGLAIGGAIGYIGGGWLFDLG) form a helical membrane-spanning segment. Over 361-367 (KSAHQPE) the chain is Periplasmic. The chain crosses the membrane as a helical span at residues 368 to 388 (LPWMMLGIIGIFTFLALGWQF). The Cytoplasmic segment spans residues 389 to 402 (SQKRTARRLLERDA).

The protein belongs to the major facilitator superfamily. DHA1 family. MdtH (TC 2.A.1.2.21) subfamily.

The protein resides in the cell inner membrane. In terms of biological role, confers resistance to norfloxacin and enoxacin. The protein is Multidrug resistance protein MdtH of Escherichia coli O7:K1 (strain IAI39 / ExPEC).